The chain runs to 133 residues: Large-conductance mechanosensitive channel (133 aa).

3 helical membrane passes run 8–28 (FAMK…GAFG), 30–50 (IVTS…LGGI), and 73–93 (GQFI…FLFI).

This sequence belongs to the MscL family. Homopentamer.

The protein resides in the cell membrane. In terms of biological role, channel that opens in response to stretch forces in the membrane lipid bilayer. May participate in the regulation of osmotic pressure changes within the cell. This is Large-conductance mechanosensitive channel from Hathewaya histolytica (Clostridium histolyticum).